The sequence spans 912 residues: DNA ligase 4 (912 aa).

ATP is bound by residues E276, T277, K278, L279, R283, E336, K350, F372, E432, K437, K454, and K456. The active-site N6-AMP-lysine intermediate is the K278. E336 lines the Mg(2+) pocket. A Mg(2+)-binding site is contributed by E432. The tract at residues 615–625 (LASKHLYIDEY) is required for catalytic activity. BRCT domains are found at residues 659–748 (KVSS…PAFM) and 809–912 (CKLC…QFLI).

It belongs to the ATP-dependent DNA ligase family. Interacts with XRCC4; the LIG4-XRCC4 subcomplex has a 1:2 stoichiometry. Component of the core long-range non-homologous end joining (NHEJ) complex (also named DNA-PK complex) composed of PRKDC, LIG4, XRCC4, XRCC6/Ku70, XRCC5/Ku86 and NHEJ1/XLF. Additional component of the NHEJ complex includes PAXX. Following autophosphorylation, PRKDC dissociates from DNA, leading to formation of the short-range NHEJ complex, composed of LIG4, XRCC4, XRCC6/Ku70, XRCC5/Ku86 and NHEJ1/XLF. It depends on Mg(2+) as a cofactor.

Its subcellular location is the nucleus. The catalysed reaction is ATP + (deoxyribonucleotide)n-3'-hydroxyl + 5'-phospho-(deoxyribonucleotide)m = (deoxyribonucleotide)n+m + AMP + diphosphate.. Functionally, DNA ligase involved in DNA non-homologous end joining (NHEJ); required for double-strand break (DSB) repair and V(D)J recombination. Catalyzes the NHEJ ligation step of the broken DNA during DSB repair by resealing the DNA breaks after the gap filling is completed. Joins single-strand breaks in a double-stranded polydeoxynucleotide in an ATP-dependent reaction. LIG4 is mechanistically flexible: it can ligate nicks as well as compatible DNA overhangs alone, while in the presence of XRCC4, it can ligate ends with 2-nucleotides (nt) microhomology and 1-nt gaps. Forms a subcomplex with XRCC4; the LIG4-XRCC4 subcomplex is responsible for the NHEJ ligation step and XRCC4 enhances the joining activity of LIG4. The protein is DNA ligase 4 of Gallus gallus (Chicken).